Here is a 349-residue protein sequence, read N- to C-terminus: MAASEAAVVSSPSLKTDTSPVLETAGTVAAMAATPSARAAAAVVAAAARTGSEARVSKAALATKLLSLSGVFAVHKPKGPTSAELLNRLKEKLLAEAGMPSPEWTKRKKQTLKIGHGGTLDSAARGVLVVGIGSGTKMLTSMLSGSKRYTAIGELGKATDTLDSTGRVTEEKPYDKITQEDIEGILQKFTGNIMQVPPLYSALKKDGQRLSTLMKRGEVVEAKPARPVTVYSISLQKFQPPFFTLDVECGGGFYIRSLVSDIGKELSSCANVLELTRTKQGPFTLEEHALPEDKWTIDDIAQSLEHCSSLFPAELALKKSKPESNEQVLSCEYITLNEPKREDDVIKTC.

Residue A2 is modified to N-acetylalanine. S11 is modified (phosphoserine). D121 acts as the Nucleophile in catalysis.

The protein belongs to the pseudouridine synthase TruB family. As to expression, highly expressed in heart, skeletal muscle and liver. Expressed at lower levels in lung, small intestine, kidney and spleen.

It localises to the nucleus. The protein resides in the cytoplasm. Its subcellular location is the cytosol. It carries out the reaction a uridine in mRNA = a pseudouridine in mRNA. The catalysed reaction is a uridine in tRNA = a pseudouridine in tRNA. The enzyme catalyses uridine(55) in tRNA = pseudouridine(55) in tRNA. In terms of biological role, pseudouridine synthase that catalyzes pseudouridylation of mRNAs and tRNAs. Mediates pseudouridylation of mRNAs with the consensus sequence 5'-GUUCNANNC-3', harboring a stem-loop structure. Constitutes the major pseudouridine synthase acting on mRNAs. Also catalyzes pseudouridylation of some tRNAs, including synthesis of pseudouridine(55) from uracil-55, in the psi GC loop of a subset of tRNAs. Promotes the processing of pri-let-7 microRNAs (pri-miRNAs) independently of its RNA pseudouridylate synthase activity. Acts by binding to the stem-loop structure on pri-let-7, preventing LIN28-binding (LIN28A and/or LIN28B), thereby enhancing the interaction between pri-let-7 and the microprocessor DGCR8, which mediates miRNA maturation. This Homo sapiens (Human) protein is Pseudouridylate synthase TRUB1.